A 1941-amino-acid polypeptide reads, in one-letter code: Myosin-7B (1941 aa).

A Myosin N-terminal SH3-like domain is found at 30–80 (DGKKRVWVPDEQDAYVEAEVKTEATGGKVTVETKDQKVLTVRETEMQPMNP). A Myosin motor domain is found at 84 to 785 (DLLEDMAMMT…LLGILEELRD (702 aa)). Position 177-184 (177-184 (GESGAGKT)) interacts with ATP. Actin-binding stretches follow at residues 662-684 (LNKL…VPNE) and 764-778 (QFGH…GLLG). One can recognise an IQ domain in the interval 788–817 (LAKVLTLLQARSRGRLMRLEYQRMLGGRDA). Residues 846–1935 (LLRSAQAEEE…KLRARSRDAL (1090 aa)) adopt a coiled-coil conformation. The segment at 1887–1941 (RQFEEAEQQASTNLAKYRKAQHELDDAEERADMAETQANKLRARSRDALGPKHKE) is disordered. Positions 1930 to 1941 (RSRDALGPKHKE) are enriched in basic and acidic residues.

Belongs to the TRAFAC class myosin-kinesin ATPase superfamily. Myosin family. In terms of assembly, muscle myosin is a hexameric protein that consists of 2 heavy chain subunits (MHC), 2 alkali light chain subunits (MLC) and 2 regulatory light chain subunits (MLC-2).

It is found in the membrane. Functionally, involved in muscle contraction. In Mus musculus (Mouse), this protein is Myosin-7B (Myh7b).